Consider the following 398-residue polypeptide: L-talarate/galactarate dehydratase (398 aa).

Substrate is bound by residues 46–48, 82–83, and Lys-195; these read DAK and KR. The Proton acceptor role is filled by Lys-197. Asp-226 is a binding site for Mg(2+). A substrate-binding site is contributed by Asn-228. Mg(2+) contacts are provided by Glu-252 and Glu-278. His-328 serves as the catalytic Proton donor/acceptor. Position 348 (Glu-348) interacts with substrate.

The protein belongs to the mandelate racemase/muconate lactonizing enzyme family. In terms of assembly, homooctamer; tetramer of dimers. Requires Mg(2+) as cofactor.

It carries out the reaction L-altrarate = 5-dehydro-4-deoxy-D-glucarate + H2O. It catalyses the reaction galactarate = 5-dehydro-4-deoxy-D-glucarate + H2O. The enzyme catalyses L-altrarate = galactarate. Its activity is regulated as follows. Competitively inhibited by tartronate. Functionally, catalyzes the efficient dehydration of both L-talarate (also called L-altrarate) and galactarate to 5-keto-4-deoxy-D-glucarate (5-KDG). Also catalyzes the epimerization of L-talarate to galactarate; epimerization occurs in competition with dehydration. Is required for the utilization of L-talarate as a carbon source. Also functions in galactarate utilization. Is not active on other acid sugars. This is L-talarate/galactarate dehydratase from Salmonella typhimurium (strain LT2 / SGSC1412 / ATCC 700720).